Here is a 332-residue protein sequence, read N- to C-terminus: Lipoyl synthase (332 aa).

Residues Cys-79, Cys-84, Cys-90, Cys-105, Cys-109, Cys-112, and Ser-319 each coordinate [4Fe-4S] cluster. Positions 91-308 (FSHGTATFMI…ADYGYEIGFK (218 aa)) constitute a Radical SAM core domain.

The protein belongs to the radical SAM superfamily. Lipoyl synthase family. [4Fe-4S] cluster is required as a cofactor.

The protein resides in the cytoplasm. It catalyses the reaction [[Fe-S] cluster scaffold protein carrying a second [4Fe-4S](2+) cluster] + N(6)-octanoyl-L-lysyl-[protein] + 2 oxidized [2Fe-2S]-[ferredoxin] + 2 S-adenosyl-L-methionine + 4 H(+) = [[Fe-S] cluster scaffold protein] + N(6)-[(R)-dihydrolipoyl]-L-lysyl-[protein] + 4 Fe(3+) + 2 hydrogen sulfide + 2 5'-deoxyadenosine + 2 L-methionine + 2 reduced [2Fe-2S]-[ferredoxin]. It participates in protein modification; protein lipoylation via endogenous pathway; protein N(6)-(lipoyl)lysine from octanoyl-[acyl-carrier-protein]: step 2/2. Functionally, catalyzes the radical-mediated insertion of two sulfur atoms into the C-6 and C-8 positions of the octanoyl moiety bound to the lipoyl domains of lipoate-dependent enzymes, thereby converting the octanoylated domains into lipoylated derivatives. This chain is Lipoyl synthase, found in Hahella chejuensis (strain KCTC 2396).